The primary structure comprises 293 residues: Movement protein BC1 (293 aa).

The tract at residues 207-228 (SWASRSTIGPSPSYAGSDQGDA) is disordered. A compositionally biased stretch (polar residues) spans 209–222 (ASRSTIGPSPSYAG).

Belongs to the begomovirus movement protein BC1 family. As to quaternary structure, binds to dimeric supercoiled plasmid DNA. Post-translationally, phosphorylated.

The protein localises to the host cell membrane. It localises to the host microsome membrane. Its subcellular location is the host endoplasmic reticulum membrane. Its function is as follows. Movement protein involved in the cell-to-cell and systemic transport of viral genomic DNA. Begomoviruses use 2 proteins to transport their DNA from cell to cell. The nuclear shuttle protein (NSP) shuttles it between nucleus and cytoplasm and the movement protein (MP) probably transports the DNA-NSP complex to the cell periphery and facilitates further movement across the cell wall. This chain is Movement protein BC1, found in Tomato golden mosaic virus (strain Yellow vein) (TGMV).